Here is a 127-residue protein sequence, read N- to C-terminus: Chorismate mutase AroH (127 aa).

The Chorismate mutase aroH-type domain occupies 3 to 121 (IRGIRGATTV…VVVLRPDLSL (119 aa)). Prephenate is bound by residues R7, 74–78 (TCMQE), R90, and Y108.

As to quaternary structure, homotrimer.

It localises to the cytoplasm. It carries out the reaction chorismate = prephenate. The protein operates within metabolic intermediate biosynthesis; prephenate biosynthesis; prephenate from chorismate: step 1/1. In terms of biological role, catalyzes the Claisen rearrangement of chorismate to prephenate. Probably involved in the aromatic amino acid biosynthesis. This chain is Chorismate mutase AroH, found in Bacillus subtilis (strain 168).